The sequence spans 267 residues: Undecaprenyl-diphosphatase (267 aa).

A run of 8 helical transmembrane segments spans residues 4 to 24 (ILII…PISS), 41 to 61 (NIQN…ILLF), 84 to 104 (ILIL…GFMF), 116 to 136 (YISY…FISL), 160 to 180 (CFSL…GLIL), 185 to 205 (YVLF…VLIL), 216 to 236 (ENIF…LIFG), and 246 to 266 (TSLI…LFTC).

It belongs to the UppP family.

The protein localises to the cell membrane. It catalyses the reaction di-trans,octa-cis-undecaprenyl diphosphate + H2O = di-trans,octa-cis-undecaprenyl phosphate + phosphate + H(+). Its function is as follows. Catalyzes the dephosphorylation of undecaprenyl diphosphate (UPP). Confers resistance to bacitracin. This chain is Undecaprenyl-diphosphatase, found in Wigglesworthia glossinidia brevipalpis.